A 311-amino-acid chain; its full sequence is MTNPLYHKHIISINDLNRDDLESVLHVADKLKQHPNSQLLKDKVIASCFFEASTRTRLSFETAIHRLGASVVGFADGSNTSLGKKGETLADTISVLRTYADAIVIRHPQEGAARLASEFAGDIPVINAGDGANQHPSQTLLDLFTIKETQGRLDNLNIAMVGDLKYGRTVHSLAQALAKFTGNHLYFIAPKVLAMPEHILHLLEEHGVEYSQHETVDEVMSELDILYMTRVQKERLDPSEYANVKAQFILTSADLVNVKDNLKILHPLPRIDEITTDVDNTPYAYYFQQAGNGIYARQALLALVLNKNLVL.

Positions 55 and 56 each coordinate carbamoyl phosphate. L-aspartate is bound at residue Lys85. Carbamoyl phosphate is bound by residues Arg106, His135, and Gln138. Residues Arg168 and Arg230 each coordinate L-aspartate. Residues Leu268 and Pro269 each contribute to the carbamoyl phosphate site.

Belongs to the aspartate/ornithine carbamoyltransferase superfamily. ATCase family. In terms of assembly, heterododecamer (2C3:3R2) of six catalytic PyrB chains organized as two trimers (C3), and six regulatory PyrI chains organized as three dimers (R2).

It catalyses the reaction carbamoyl phosphate + L-aspartate = N-carbamoyl-L-aspartate + phosphate + H(+). It participates in pyrimidine metabolism; UMP biosynthesis via de novo pathway; (S)-dihydroorotate from bicarbonate: step 2/3. Functionally, catalyzes the condensation of carbamoyl phosphate and aspartate to form carbamoyl aspartate and inorganic phosphate, the committed step in the de novo pyrimidine nucleotide biosynthesis pathway. The polypeptide is Aspartate carbamoyltransferase catalytic subunit (Proteus mirabilis (strain HI4320)).